Consider the following 400-residue polypeptide: Chaperone protein DnaJ (400 aa).

Residues 4–69 (DYYETLGVTR…DKRRRYDQFG (66 aa)) form the J domain. A CR-type zinc finger spans residues 156–237 (GVEKTLKVKR…CYGEGIKLGE (82 aa)). Residues Cys-169, Cys-172, Cys-185, Cys-188, Cys-211, Cys-214, Cys-225, and Cys-228 each contribute to the Zn(2+) site. CXXCXGXG motif repeat units follow at residues 169 to 176 (CEVCNGTG), 185 to 192 (CQTCHGSG), 211 to 218 (CPTCGGEG), and 225 to 232 (CTACYGEG).

The protein belongs to the DnaJ family. As to quaternary structure, homodimer. The cofactor is Zn(2+).

It localises to the cytoplasm. Participates actively in the response to hyperosmotic and heat shock by preventing the aggregation of stress-denatured proteins and by disaggregating proteins, also in an autonomous, DnaK-independent fashion. Unfolded proteins bind initially to DnaJ; upon interaction with the DnaJ-bound protein, DnaK hydrolyzes its bound ATP, resulting in the formation of a stable complex. GrpE releases ADP from DnaK; ATP binding to DnaK triggers the release of the substrate protein, thus completing the reaction cycle. Several rounds of ATP-dependent interactions between DnaJ, DnaK and GrpE are required for fully efficient folding. Also involved, together with DnaK and GrpE, in the DNA replication of plasmids through activation of initiation proteins. This Chlorobium chlorochromatii (strain CaD3) protein is Chaperone protein DnaJ.